Reading from the N-terminus, the 78-residue chain is Large ribosomal subunit protein bL28 (78 aa).

The segment at M1 to H20 is disordered.

It belongs to the bacterial ribosomal protein bL28 family.

In Actinobacillus succinogenes (strain ATCC 55618 / DSM 22257 / CCUG 43843 / 130Z), this protein is Large ribosomal subunit protein bL28.